The primary structure comprises 550 residues: C-type lectin domain family 4 member F (550 aa).

The Cytoplasmic segment spans residues 1–42 (MKEAELNRDVAKFCTDNQCVILQPQGLGPKSAAPMAPRTLRH). The helical; Signal-anchor for type II membrane protein transmembrane segment at 43–69 (VQAIVALVVVTVFFSLLALFVVVLQPW) threads the bilayer. Residues 70-550 (RQKQNEDHPV…DWSVARTDQS (481 aa)) lie on the Extracellular side of the membrane. N-linked (GlcNAc...) asparagine glycans are attached at residues N87, N93, N115, N132, N209, and N255. In terms of domain architecture, C-type lectin spans 438-538 (NFCVSQGAHL…GTAYNWVCKK (101 aa)). 2 disulfide bridges follow: C440/C536 and C516/C528.

In terms of tissue distribution, kupffer cells.

It localises to the membrane. Its function is as follows. Receptor with an affinity for galactose and fucose. Could be involved in endocytosis. In Rattus norvegicus (Rat), this protein is C-type lectin domain family 4 member F (Clec4f).